The following is a 602-amino-acid chain: Probable translation initiation factor IF-2 (602 aa).

The tr-type G domain maps to 15–230 (LRTPIVAVLG…VLMGLSQRYL (216 aa)). The G1 stretch occupies residues 24–31 (GHVDHGKT). Residue 24–31 (GHVDHGKT) participates in GTP binding. Positions 49 to 53 (AITQH) are G2. Residues 86 to 89 (DTPG) are G3. GTP is bound by residues 86–90 (DTPGH) and 140–143 (NKID). Positions 140-143 (NKID) are G4. A G5 region spans residues 208 to 210 (SAE).

It belongs to the TRAFAC class translation factor GTPase superfamily. Classic translation factor GTPase family. IF-2 subfamily.

In terms of biological role, function in general translation initiation by promoting the binding of the formylmethionine-tRNA to ribosomes. Seems to function along with eIF-2. The protein is Probable translation initiation factor IF-2 of Natronomonas pharaonis (strain ATCC 35678 / DSM 2160 / CIP 103997 / JCM 8858 / NBRC 14720 / NCIMB 2260 / Gabara) (Halobacterium pharaonis).